The primary structure comprises 355 residues: DnaJ homolog dnj-20 (355 aa).

Residues 1 to 21 form the signal peptide; the sequence is MRILNVSLLVLASSLVAFVEC. The J domain occupies 24–89; that stretch reads DFYKILGVAK…EKRAMYDRHG (66 aa).

The sequence is that of DnaJ homolog dnj-20 from Caenorhabditis elegans.